The sequence spans 48 residues: Phospholipase A2 superbin d (48 aa).

Residues tyrosine 28, glycine 30, and glycine 32 each coordinate Ca(2+). Cysteine 29 and cysteine 45 are joined by a disulfide. Histidine 48 is a catalytic residue.

It depends on Ca(2+) as a cofactor. In terms of tissue distribution, expressed by the venom gland.

It localises to the secreted. It catalyses the reaction a 1,2-diacyl-sn-glycero-3-phosphocholine + H2O = a 1-acyl-sn-glycero-3-phosphocholine + a fatty acid + H(+). Its function is as follows. Snake venom phospholipase A2 (PLA2) that inhibits collagen-induced platelet aggregation. In terms of inhibition of platelet aggregation, superbin d is less potent as superbin a, b, and c. PLA2 catalyzes the calcium-dependent hydrolysis of the 2-acyl groups in 3-sn-phosphoglycerides. The chain is Phospholipase A2 superbin d from Austrelaps superbus (Lowland copperhead snake).